A 387-amino-acid chain; its full sequence is Phosphoglycerate kinase (387 aa).

Substrate is bound by residues 21–23 (DLN), arginine 36, 59–62 (HLGR), arginine 113, and arginine 146. Residues lysine 197, glutamate 314, and 340–343 (GGDT) contribute to the ATP site.

The protein belongs to the phosphoglycerate kinase family. Monomer.

It localises to the cytoplasm. It catalyses the reaction (2R)-3-phosphoglycerate + ATP = (2R)-3-phospho-glyceroyl phosphate + ADP. Its pathway is carbohydrate degradation; glycolysis; pyruvate from D-glyceraldehyde 3-phosphate: step 2/5. The sequence is that of Phosphoglycerate kinase from Aliivibrio salmonicida (strain LFI1238) (Vibrio salmonicida (strain LFI1238)).